The following is a 317-amino-acid chain: Homoserine O-acetyltransferase (317 aa).

Cys142 serves as the catalytic Acyl-thioester intermediate. Substrate is bound by residues Lys163 and Ser192. The active-site Proton acceptor is the His235. Glu237 is an active-site residue. Residue Arg249 participates in substrate binding.

It belongs to the MetA family.

Its subcellular location is the cytoplasm. It carries out the reaction L-homoserine + acetyl-CoA = O-acetyl-L-homoserine + CoA. Its pathway is amino-acid biosynthesis; L-methionine biosynthesis via de novo pathway; O-acetyl-L-homoserine from L-homoserine: step 1/1. Functionally, transfers an acetyl group from acetyl-CoA to L-homoserine, forming acetyl-L-homoserine. The chain is Homoserine O-acetyltransferase from Rhizorhabdus wittichii (strain DSM 6014 / CCUG 31198 / JCM 15750 / NBRC 105917 / EY 4224 / RW1) (Sphingomonas wittichii).